We begin with the raw amino-acid sequence, 463 residues long: Fumarate hydratase class II (463 aa).

Substrate-binding positions include serine 97–threonine 99, histidine 128–aspartate 131, serine 138–asparagine 140, and threonine 186. Histidine 187 serves as the catalytic Proton donor/acceptor. The active site involves serine 317. Residues serine 318 and lysine 323–asparagine 325 each bind substrate.

Belongs to the class-II fumarase/aspartase family. Fumarase subfamily. Homotetramer.

It is found in the cytoplasm. The enzyme catalyses (S)-malate = fumarate + H2O. It participates in carbohydrate metabolism; tricarboxylic acid cycle; (S)-malate from fumarate: step 1/1. Involved in the TCA cycle. Catalyzes the stereospecific interconversion of fumarate to L-malate. The protein is Fumarate hydratase class II of Campylobacter jejuni subsp. jejuni serotype O:2 (strain ATCC 700819 / NCTC 11168).